An 82-amino-acid chain; its full sequence is Metallothionein (82 aa).

Residues cysteine 6, cysteine 8, cysteine 11, cysteine 13, cysteine 29, cysteine 33, histidine 37, cysteine 43, cysteine 48, and cysteine 50 each coordinate Cd(2+). Residues cysteine 6, cysteine 8, and cysteine 11 each contribute to the Zn(2+) site. 6 residues coordinate Zn(2+): cysteine 29, cysteine 33, histidine 37, cysteine 43, cysteine 48, and cysteine 50. A disordered region spans residues 61-82 (ITNNQLDEALEETFPASDPISP).

This sequence belongs to the metallothionein superfamily.

Metallothioneins are small proteins that have a high content of cysteine residues which allow them to bind heavy metal ions through clusters of thiolate bonds. Preferentially, binds four Cd(2+) ions. Also binds three Zn(2+) ions but with less affinity. Required for long-term viability. May play a role in the storage or sequestration of metals when present in excess. The chain is Metallothionein from Pseudomonas fluorescens (strain Q2-87).